Here is a 142-residue protein sequence, read N- to C-terminus: Large ribosomal subunit protein uL11 (142 aa).

It belongs to the universal ribosomal protein uL11 family. In terms of assembly, part of the ribosomal stalk of the 50S ribosomal subunit. Interacts with L10 and the large rRNA to form the base of the stalk. L10 forms an elongated spine to which L12 dimers bind in a sequential fashion forming a multimeric L10(L12)X complex. One or more lysine residues are methylated.

In terms of biological role, forms part of the ribosomal stalk which helps the ribosome interact with GTP-bound translation factors. The polypeptide is Large ribosomal subunit protein uL11 (Ruthia magnifica subsp. Calyptogena magnifica).